A 590-amino-acid polypeptide reads, in one-letter code: MKRTNYAGNITEEYLNQTITVKGWVAKRRNLGGLIFIDLRDREGIVQIVVNPETAATEVAEAADKARNEFVLEVTGKVVERASKNDKIKTGGIEIEATAIEILSTSKTTPFEIKDDVEVLDDTRLKYRYLDLRRPEMLKNITMRHATTRSIREYLDGAGFIDVETPFLNKSTPEGARDYLVPSRVNKGEFYALPQSPQLMKQLLMTAGLDRYYQIVKCFRDEDLRGDRQPEFTQVDLETSFLGEEEIQELTEELIAKVMKDVKGIDVTLPFPRMNYDDAMNFYGSDKPDTRFELLLTDLSALAKTVDFKVFQEAEVVKAIVVKGAADKYSRKSIDKLTEQAKQNGAKGLAWVKFEKGEFAGGVSKFLAESTDSFVNELKLTDNDLVLFVADSLDVANSALGALRLTIGKQQGLIDFRKFNFLWVIDWPMFEWSDEEERYMSAHHPFTLPTKETQAFLSADGHRKDSDLKKVRAHAYDIVLNGYELGGGSLRINSRDLQEEMLSALGFKLEDANEQFGFLLEALDYGFPPHGGLALGLDRFVMLLAGKDNIREVIAFPKNNKASDPMTQAPSIVADKQLEELSIKLANKDQ.

Glu174 contacts L-aspartate. Positions 198–201 are aspartate; that stretch reads QLMK. Position 220 (Arg220) interacts with L-aspartate. Residues 220 to 222 and Gln229 contribute to the ATP site; that span reads RDE. His443 provides a ligand contact to L-aspartate. Glu484 is an ATP binding site. Arg491 provides a ligand contact to L-aspartate. 536 to 539 is an ATP binding site; that stretch reads GLDR.

Belongs to the class-II aminoacyl-tRNA synthetase family. Type 1 subfamily. As to quaternary structure, homodimer.

It localises to the cytoplasm. It catalyses the reaction tRNA(Asp) + L-aspartate + ATP = L-aspartyl-tRNA(Asp) + AMP + diphosphate. In terms of biological role, catalyzes the attachment of L-aspartate to tRNA(Asp) in a two-step reaction: L-aspartate is first activated by ATP to form Asp-AMP and then transferred to the acceptor end of tRNA(Asp). The polypeptide is Aspartate--tRNA ligase (Lactococcus lactis subsp. cremoris (strain MG1363)).